Reading from the N-terminus, the 168-residue chain is MAVLEILTAPDPRLRVQSKEVTDVAAVQTLIDDLLETLYETDNGVGLAAPQVGREEAIVVIDLSENRDEPLVLVNPKVVSGSNKEMGQEGCLSVPDYYADVERYTSVVVEALDRDGKPLRIETSEFLAIVMQHEIDHLSGNLFIDYLSPLKQQMAMKKVKKHNKLRAR.

Fe cation is bound by residues C91 and H133. Residue E134 is part of the active site. Position 137 (H137) interacts with Fe cation.

It belongs to the polypeptide deformylase family. The cofactor is Fe(2+).

The enzyme catalyses N-terminal N-formyl-L-methionyl-[peptide] + H2O = N-terminal L-methionyl-[peptide] + formate. Its function is as follows. Removes the formyl group from the N-terminal Met of newly synthesized proteins. Requires at least a dipeptide for an efficient rate of reaction. N-terminal L-methionine is a prerequisite for activity but the enzyme has broad specificity at other positions. The protein is Peptide deformylase 2 of Vibrio vulnificus (strain CMCP6).